We begin with the raw amino-acid sequence, 159 residues long: 6,7-dimethyl-8-ribityllumazine synthase (159 aa).

Residues Phe22, 57–59 (AVE), and 81–83 (AVI) each bind 5-amino-6-(D-ribitylamino)uracil. 86–87 (GT) is a binding site for (2S)-2-hydroxy-3-oxobutyl phosphate. Residue His89 is the Proton donor of the active site. Phe114 is a binding site for 5-amino-6-(D-ribitylamino)uracil. Residue Arg128 participates in (2S)-2-hydroxy-3-oxobutyl phosphate binding.

This sequence belongs to the DMRL synthase family. In terms of assembly, forms an icosahedral capsid composed of 60 subunits, arranged as a dodecamer of pentamers.

The catalysed reaction is (2S)-2-hydroxy-3-oxobutyl phosphate + 5-amino-6-(D-ribitylamino)uracil = 6,7-dimethyl-8-(1-D-ribityl)lumazine + phosphate + 2 H2O + H(+). The protein operates within cofactor biosynthesis; riboflavin biosynthesis; riboflavin from 2-hydroxy-3-oxobutyl phosphate and 5-amino-6-(D-ribitylamino)uracil: step 1/2. Its function is as follows. Catalyzes the formation of 6,7-dimethyl-8-ribityllumazine by condensation of 5-amino-6-(D-ribitylamino)uracil with 3,4-dihydroxy-2-butanone 4-phosphate. This is the penultimate step in the biosynthesis of riboflavin. This Shewanella baltica (strain OS155 / ATCC BAA-1091) protein is 6,7-dimethyl-8-ribityllumazine synthase.